The primary structure comprises 591 residues: Probable translation initiation factor IF-2 (591 aa).

The region spanning 6–220 is the tr-type G domain; that stretch reads IRTPIVCVMG…IMIGLAQRYM (215 aa). The G1 stretch occupies residues 15-22; sequence GHVDHGKT. 15–22 provides a ligand contact to GTP; that stretch reads GHVDHGKT. Positions 40–44 are G2; sequence AITQH. Positions 76–79 are G3; it reads DTPG. GTP contacts are provided by residues 76 to 80 and 130 to 133; these read DTPGH and TKVD. The segment at 130–133 is G4; sequence TKVD. Residues 198–200 are G5; it reads SAH.

It belongs to the TRAFAC class translation factor GTPase superfamily. Classic translation factor GTPase family. IF-2 subfamily.

Its function is as follows. Function in general translation initiation by promoting the binding of the formylmethionine-tRNA to ribosomes. Seems to function along with eIF-2. The polypeptide is Probable translation initiation factor IF-2 (Methanoregula boonei (strain DSM 21154 / JCM 14090 / 6A8)).